Reading from the N-terminus, the 248-residue chain is MQFINKQSEQLFIELKAFFKQYHVFIKERQYYLEALTHNSYANEHNLSYTYQRMEFLGDAILAKEISLYLFLSFPDKNEGEITNLRSKIVREGTLAELVRRMNWAPFLLLGKGEIKTKGYEKNRILADIYESMIAALYLDLGEDVVRTFINNTLIRMVSNPGFFDKIRDYKTELQEFLQAGDARTLEYKLIKESQPLEGNRVLYTVVAEIGGIRYGEGCGYTHKEAEQLAARDALQKLATKSKYHFEK.

The RNase III domain maps to 15-142 (LKAFFKQYHV…MIAALYLDLG (128 aa)). Glu-55 is a Mg(2+) binding site. Asp-59 is an active-site residue. Mg(2+) is bound by residues Asp-128 and Glu-131. Residue Glu-131 is part of the active site. Residues 169–240 (DYKTELQEFL…ARDALQKLAT (72 aa)) enclose the DRBM domain.

The protein belongs to the ribonuclease III family. In terms of assembly, homodimer. The cofactor is Mg(2+).

It localises to the cytoplasm. The enzyme catalyses Endonucleolytic cleavage to 5'-phosphomonoester.. Its function is as follows. Digests double-stranded RNA. Involved in the processing of primary rRNA transcript to yield the immediate precursors to the large and small rRNAs (23S and 16S). Processes some mRNAs, and tRNAs when they are encoded in the rRNA operon. Processes pre-crRNA and tracrRNA of type II CRISPR loci if present in the organism. The protein is Ribonuclease 3 of Spiroplasma citri.